We begin with the raw amino-acid sequence, 160 residues long: Globin CTT-II beta (160 aa).

Positions 1 to 15 (MKFLVLALCIAAAVA) are cleaved as a signal peptide. The region spanning 17–160 (PLSADEASLV…NVFNMMFSYL (144 aa)) is the Globin domain. The heme b site is built by His-75 and His-110.

This sequence belongs to the globin family. In terms of assembly, homodimer.

This is Globin CTT-II beta from Chironomus thummi thummi (Midge).